Here is a 629-residue protein sequence, read N- to C-terminus: tRNA uridine 5-carboxymethylaminomethyl modification enzyme MnmG (629 aa).

Residues 13–18 (GGGHAG), Val-125, and Ser-180 contribute to the FAD site. Residue 273 to 287 (GPRYCPSIEDKVMRF) coordinates NAD(+). Residue Gln-370 coordinates FAD.

The protein belongs to the MnmG family. In terms of assembly, homodimer. Heterotetramer of two MnmE and two MnmG subunits. The cofactor is FAD.

It is found in the cytoplasm. In terms of biological role, NAD-binding protein involved in the addition of a carboxymethylaminomethyl (cmnm) group at the wobble position (U34) of certain tRNAs, forming tRNA-cmnm(5)s(2)U34. The sequence is that of tRNA uridine 5-carboxymethylaminomethyl modification enzyme MnmG from Salmonella paratyphi C (strain RKS4594).